The following is a 196-amino-acid chain: Beta-crystallin A4 (196 aa).

At Thr-2 the chain carries N-acetylthreonine. Residues 2–11 form an N-terminal arm region; the sequence is TLQCTKSAGH. 2 Beta/gamma crystallin 'Greek key' domains span residues 12–51 and 52–98; these read WRMV…KVLS and GAWV…RPVA. Positions 99-104 are connecting peptide; the sequence is CANHRD. Beta/gamma crystallin 'Greek key' domains follow at residues 105–146 and 147–195; these read SRLT…HVQS and GAWV…RRIQ.

It belongs to the beta/gamma-crystallin family. As to quaternary structure, homo/heterodimer, or complexes of higher-order. The structure of beta-crystallin oligomers seems to be stabilized through interactions between the N-terminal arms.

Its function is as follows. Crystallins are the dominant structural components of the vertebrate eye lens. The polypeptide is Beta-crystallin A4 (Cryba4) (Mus musculus (Mouse)).